A 105-amino-acid polypeptide reads, in one-letter code: Nucleoid-associated protein EAT1b_1710 (105 aa).

Low complexity predominate over residues 1-16; the sequence is MRGMGNMNNMMKQMQK. The disordered stretch occupies residues 1 to 26; sequence MRGMGNMNNMMKQMQKMQKDMAKAQE. A compositionally biased stretch (basic and acidic residues) spans 17-26; it reads MQKDMAKAQE.

It belongs to the YbaB/EbfC family. As to quaternary structure, homodimer.

The protein localises to the cytoplasm. Its subcellular location is the nucleoid. In terms of biological role, binds to DNA and alters its conformation. May be involved in regulation of gene expression, nucleoid organization and DNA protection. The protein is Nucleoid-associated protein EAT1b_1710 of Exiguobacterium sp. (strain ATCC BAA-1283 / AT1b).